Reading from the N-terminus, the 82-residue chain is ATP synthase subunit c, chloroplastic (82 aa).

2 helical membrane-spanning segments follow: residues 3-23 and 57-77; these read PIVA…AAIG and FAFM…LLFA.

The protein belongs to the ATPase C chain family. As to quaternary structure, F-type ATPases have 2 components, F(1) - the catalytic core - and F(0) - the membrane proton channel. F(1) has five subunits: alpha(3), beta(3), gamma(1), delta(1), epsilon(1). F(0) has four main subunits: a(1), b(1), b'(1) and c(10-14). The alpha and beta chains form an alternating ring which encloses part of the gamma chain. F(1) is attached to F(0) by a central stalk formed by the gamma and epsilon chains, while a peripheral stalk is formed by the delta, b and b' chains.

Its subcellular location is the plastid. The protein resides in the chloroplast thylakoid membrane. Functionally, f(1)F(0) ATP synthase produces ATP from ADP in the presence of a proton or sodium gradient. F-type ATPases consist of two structural domains, F(1) containing the extramembraneous catalytic core and F(0) containing the membrane proton channel, linked together by a central stalk and a peripheral stalk. During catalysis, ATP synthesis in the catalytic domain of F(1) is coupled via a rotary mechanism of the central stalk subunits to proton translocation. In terms of biological role, key component of the F(0) channel; it plays a direct role in translocation across the membrane. A homomeric c-ring of between 10-14 subunits forms the central stalk rotor element with the F(1) delta and epsilon subunits. In Tetradesmus obliquus (Green alga), this protein is ATP synthase subunit c, chloroplastic.